The sequence spans 160 residues: Cytochrome b6-f complex subunit 4 (160 aa).

Helical transmembrane passes span 36–56, 95–115, and 131–151; these read LLYI…GLAV, LLGV…PFLE, and TVFL…TLPI.

Belongs to the cytochrome b family. PetD subfamily. As to quaternary structure, the 4 large subunits of the cytochrome b6-f complex are cytochrome b6, subunit IV (17 kDa polypeptide, petD), cytochrome f and the Rieske protein, while the 4 small subunits are petG, petL, petM and petN. The complex functions as a dimer.

The protein localises to the plastid. It localises to the chloroplast thylakoid membrane. Component of the cytochrome b6-f complex, which mediates electron transfer between photosystem II (PSII) and photosystem I (PSI), cyclic electron flow around PSI, and state transitions. The chain is Cytochrome b6-f complex subunit 4 from Spinacia oleracea (Spinach).